The primary structure comprises 361 residues: tRNA-specific 2-thiouridylase MnmA (361 aa).

ATP is bound by residues 6-13 (LVSGGVDS) and I32. The tract at residues 93–95 (NPD) is interaction with target base in tRNA. The active-site Nucleophile is the C98. C98 and C193 are disulfide-bonded. G121 is an ATP binding site. The tract at residues 143–145 (KDQ) is interaction with tRNA. The active-site Cysteine persulfide intermediate is the C193.

This sequence belongs to the MnmA/TRMU family.

It is found in the cytoplasm. The enzyme catalyses S-sulfanyl-L-cysteinyl-[protein] + uridine(34) in tRNA + AH2 + ATP = 2-thiouridine(34) in tRNA + L-cysteinyl-[protein] + A + AMP + diphosphate + H(+). Catalyzes the 2-thiolation of uridine at the wobble position (U34) of tRNA, leading to the formation of s(2)U34. The sequence is that of tRNA-specific 2-thiouridylase MnmA from Porphyromonas gingivalis (strain ATCC BAA-308 / W83).